The primary structure comprises 341 residues: Probable 2' cyclic ADP-D-ribose synthase TcpO (341 aa).

Residues 204 to 336 enclose the TIR domain; it reads KEYDIFVSHS…EIIHEILERI (133 aa). NAD(+)-binding positions include 213–214 and lysine 243; that span reads SS. The active site involves glutamate 279.

The catalysed reaction is NAD(+) + H2O = ADP-D-ribose + nicotinamide + H(+). It carries out the reaction NAD(+) = 2'cADPR + nicotinamide + H(+). Functionally, NAD(+) hydrolase (NADase) that catalyzes cleavage of NAD(+) into ADP-D-ribose (ADPR) and nicotinamide. In addition to ADPR, also generates a cyclization variant of cyclic ADPR (cADPR), termed v-cADPR (probably 2'cADPR). The sequence is that of Probable 2' cyclic ADP-D-ribose synthase TcpO from Methanobrevibacter olleyae.